Consider the following 464-residue polypeptide: tRNA-2-methylthio-N(6)-dimethylallyladenosine synthase (464 aa).

The region spanning 4–119 (RTFHIMTFGC…APQAIERLVQ (116 aa)) is the MTTase N-terminal domain. [4Fe-4S] cluster-binding residues include Cys-13, Cys-48, Cys-82, Cys-158, Cys-162, and Cys-165. Residues 144–375 (GEVPVSAYVN…QEVQNEYSEA (232 aa)) form the Radical SAM core domain. The TRAM domain occupies 378-461 (QAMVGKTVMV…KHSLTGEPAG (84 aa)). A disordered region spans residues 393 to 420 (SPKSAAGSGTDAQNAAEESGRTASSWQG).

Belongs to the methylthiotransferase family. MiaB subfamily. Monomer. Requires [4Fe-4S] cluster as cofactor.

The protein resides in the cytoplasm. The enzyme catalyses N(6)-dimethylallyladenosine(37) in tRNA + (sulfur carrier)-SH + AH2 + 2 S-adenosyl-L-methionine = 2-methylsulfanyl-N(6)-dimethylallyladenosine(37) in tRNA + (sulfur carrier)-H + 5'-deoxyadenosine + L-methionine + A + S-adenosyl-L-homocysteine + 2 H(+). Catalyzes the methylthiolation of N6-(dimethylallyl)adenosine (i(6)A), leading to the formation of 2-methylthio-N6-(dimethylallyl)adenosine (ms(2)i(6)A) at position 37 in tRNAs that read codons beginning with uridine. The polypeptide is tRNA-2-methylthio-N(6)-dimethylallyladenosine synthase (Oleidesulfovibrio alaskensis (strain ATCC BAA-1058 / DSM 17464 / G20) (Desulfovibrio alaskensis)).